The primary structure comprises 2570 residues: Highly reducing polyketide synthase tstA (2570 aa).

One can recognise a Ketosynthase family 3 (KS3) domain in the interval 16–443 (AMPIAVVGIG…GANAHVVLEN (428 aa)). Catalysis depends on for beta-ketoacyl synthase activity residues C191, H326, and H366. The segment at 458–478 (HTRKSATESSGTSTPSNPGPH) is disordered. Over residues 464–478 (TESSGTSTPSNPGPH) the composition is skewed to low complexity. In terms of domain architecture, Malonyl-CoA:ACP transacylase (MAT) spans 567 to 898 (FVFTGQGAQW…YSALVRNKNA (332 aa)). Positions 965-1103 (TDLLGVLERN…GLVSVVAPQK (139 aa)) are N-terminal hotdog fold. The PKS/mFAS DH domain maps to 965-1293 (TDLLGVLERN…CATLAREGAD (329 aa)). Residue H997 is the Proton acceptor; for dehydratase activity of the active site. The C-terminal hotdog fold stretch occupies residues 1133 to 1293 (RRNINVPQFY…CATLAREGAD (161 aa)). D1198 serves as the catalytic Proton donor; for dehydratase activity. The interval 1343 to 1645 (LERAAYYMLK…IATSINSNNY (303 aa)) is methyltransferase (CMeT) domain. An Enoyl reductase (ER) domain is found at 1866-2178 (GLLDSIFWTD…TGGHMGKLVG (313 aa)). Residues 2202-2379 (ASYVLIGGLG…ATTIDLGAIS (178 aa)) form the Ketoreductase (KR) domain. In terms of domain architecture, Carrier spans 2482–2559 (DASELILGAL…HLATKIAQRS (78 aa)). An O-(pantetheine 4'-phosphoryl)serine modification is found at S2519.

Pantetheine 4'-phosphate is required as a cofactor.

Its pathway is secondary metabolite biosynthesis. Its function is as follows. Highly reducing polyketide synthase; part of the gene cluster that mediates the biosynthesis of the antihypercholesterolemic agents phomoidrides which are dimeric anhydrides. The pathway begins with the highly reducing polyketide synthase tstA that catalyzes the formation of a C12-fatty acyl-ACP, starting from one acetate and 5 malonate units. The hydrolase tstM is involved in the release of the C12-fatty acyl chain from tstA. The alkylcitrate synthase (ACS) tstJ and the alkylcitrate dehydratase (ACDH) tstI then give rise to decarboxylated monomeric anhydrides by coupling the C12-fatty acyl chain with oxalacetic acid. The cyclase tstC is responsible for the dimerization of the monomeric anhydrides which leads to the production of prephomoidride that contains the characteristic bicyclo[4.3.1]deca-1,6-diene system of phomoidrides. Iterative oxidation catalyzed by the alpha-ketoglutarate-dependent dioxygenase tstK produced then phomoidride A. Finally, the methyltransferase tstE converts phomoidride A to phomoidride B via an acetalization reaction. The phosphatidylethanolamine-binding protein tstB and tstN are not essential for dimerization and their functions have still to be determined. The protein is Highly reducing polyketide synthase tstA of Talaromyces stipitatus (strain ATCC 10500 / CBS 375.48 / QM 6759 / NRRL 1006) (Penicillium stipitatum).